Here is a 118-residue protein sequence, read N- to C-terminus: EVKLLESGGGLVQPGGSLLSCAASGFDFSRYWMSWARQAPGKGQEWIGEINPGSSTINYTPSLKDKFIISRDNAKNTLYLQMSKVRSEDTALYYCARLGYYGYFDYWGQGTTLTVSSE.

In terms of domain architecture, Ig-like spans 1–111 (EVKLLESGGG…GYFDYWGQGT (111 aa)).

This chain is Ig heavy chain V region X24, found in Mus musculus (Mouse).